Reading from the N-terminus, the 358-residue chain is Plastoglobulin-1, chloroplastic (358 aa).

A chloroplast-targeting transit peptide spans 1 to 47 (MALLSSTLRAPLVFSKNPKPVSLSSLHSRIYLSPRSPRFPSLRFISA). The tract at residues 48–114 (AGDTGDAEKP…NDAGNGTPTF (67 aa)) is disordered.

The protein belongs to the PAP/fibrillin family.

The protein resides in the plastid. It localises to the chloroplast. May form together with other plastoglobulins a coat on the surface of the lipoprotein particle. The coat may contain receptors for attachment to the thylakoid membrane as well as regulatory proteins that may function in the transfer of lipids to and from the thylakoid membranes. This Pisum sativum (Garden pea) protein is Plastoglobulin-1, chloroplastic (PG1).